We begin with the raw amino-acid sequence, 581 residues long: Arginine--tRNA ligase (581 aa).

Positions 126 to 136 (PNLAKEMHVGH) match the 'HIGH' region motif.

This sequence belongs to the class-I aminoacyl-tRNA synthetase family. In terms of assembly, monomer.

The protein resides in the cytoplasm. The enzyme catalyses tRNA(Arg) + L-arginine + ATP = L-arginyl-tRNA(Arg) + AMP + diphosphate. The sequence is that of Arginine--tRNA ligase from Shewanella sp. (strain MR-7).